We begin with the raw amino-acid sequence, 732 residues long: Adducin-related protein 1 (732 aa).

Disordered stretches follow at residues 1 to 22 (MIGRKEKERERPYYRDPDDPEY) and 684 to 732 (TRFS…KKDK). Residues 685 to 705 (RFSSTQGTSEGNTTSRSCTTA) show a composition bias toward polar residues. The segment covering 716–732 (KKKKKKGFLSFMRKKDK) has biased composition (basic residues).

The protein belongs to the aldolase class II family. Adducin subfamily.

Its subcellular location is the cytoplasm. It localises to the cytoskeleton. The protein resides in the cell membrane. Membrane-cytoskeleton-associated protein that promotes the assembly of the spectrin-actin network. Plays a role in time-dependent memmory loss and the retention of conditioned behavior over time. The sequence is that of Adducin-related protein 1 from Caenorhabditis elegans.